We begin with the raw amino-acid sequence, 166 residues long: Putative 4-hydroxy-4-methyl-2-oxoglutarate aldolase (166 aa).

Residues 74–77 and R96 each bind substrate; that span reads GDQI. D97 is a binding site for a divalent metal cation.

It belongs to the class II aldolase/RraA-like family. Homotrimer. The cofactor is a divalent metal cation.

The catalysed reaction is 4-hydroxy-4-methyl-2-oxoglutarate = 2 pyruvate. It carries out the reaction oxaloacetate + H(+) = pyruvate + CO2. Its function is as follows. Catalyzes the aldol cleavage of 4-hydroxy-4-methyl-2-oxoglutarate (HMG) into 2 molecules of pyruvate. Also contains a secondary oxaloacetate (OAA) decarboxylase activity due to the common pyruvate enolate transition state formed following C-C bond cleavage in the retro-aldol and decarboxylation reactions. The sequence is that of Putative 4-hydroxy-4-methyl-2-oxoglutarate aldolase from Xanthomonas campestris pv. campestris (strain B100).